The primary structure comprises 433 residues: MSDLVSRPGLSERTARAVADRLAGRAGWRNPLIFAGPAVVASIAYMDPGNFATNIQAGARYGYDLLWVVLLASLIAMLFQGLSARLGIVTGRNLAELCRDTLPPALTIPMWIISEIAAMATDLAEFLGGAIGIALLAHLPLMAGMAITGIVTYGILLLDRRGFRPMELVIGALVGVIALCYLAELLIVPVHWRQAALHTVLPSLPDAEALTIAVGIVGATVMPHALFLHSGLSGARVAPQDAAQRRRLVRYSNIEVLAALGVAGMVNMAMVAMAAGAFHPAHQGIAEIGEAYRTLSPLLGAGAAVIFLISLLASGVSSSVVGTLAGQMVMQGFVGFSIPIWLRRALTMIPGFVVIGLGVNPTRALVLSQVVLSLALPVPMLALLWFSTRRALMGALAVRGITAIAAIGGAIVILGLNVILLLQIFGVNVPLPG.

The next 11 membrane-spanning stretches (helical) occupy residues 32–52 (LIFA…GNFA), 62–82 (GYDL…FQGL), 101–121 (TLPP…AMAT), 131–151 (IGIA…TGIV), 168–188 (LVIG…LLIV), 209–229 (ALTI…LFLH), 256–276 (VLAA…MAAG), 296–316 (SPLL…ASGV), 345–365 (ALTM…TRAL), 366–386 (VLSQ…LLWF), and 401–421 (ITAI…VILL).

This sequence belongs to the NRAMP family.

Its subcellular location is the cell inner membrane. Its function is as follows. H(+)-stimulated, divalent metal cation uptake system. The protein is Divalent metal cation transporter MntH of Acidiphilium cryptum (strain JF-5).